A 280-amino-acid chain; its full sequence is Lacto-N-neotetraose biosynthesis glycosyltransferase LgtE (280 aa).

Belongs to the glycosyltransferase 25 family.

Its pathway is glycan metabolism; lacto-N-neotetraose biosynthesis. It functions in the pathway bacterial outer membrane biogenesis; lipooligosaccharide biosynthesis. Its function is as follows. Adds the first galactose to the lacto-N-tetraose chain in lipooligosaccharide (LOS). The chain is Lacto-N-neotetraose biosynthesis glycosyltransferase LgtE (lgtE) from Neisseria gonorrhoeae.